The primary structure comprises 379 residues: Succinyl-diaminopimelate desuccinylase (379 aa).

Zn(2+) is bound at residue His-70. Residue Asp-72 is part of the active site. Asp-103 serves as a coordination point for Zn(2+). The Proton acceptor role is filled by Glu-137. Residues Glu-138, Glu-166, and His-352 each coordinate Zn(2+).

This sequence belongs to the peptidase M20A family. DapE subfamily. In terms of assembly, homodimer. Zn(2+) is required as a cofactor. The cofactor is Co(2+).

The catalysed reaction is N-succinyl-(2S,6S)-2,6-diaminopimelate + H2O = (2S,6S)-2,6-diaminopimelate + succinate. It participates in amino-acid biosynthesis; L-lysine biosynthesis via DAP pathway; LL-2,6-diaminopimelate from (S)-tetrahydrodipicolinate (succinylase route): step 3/3. Its function is as follows. Catalyzes the hydrolysis of N-succinyl-L,L-diaminopimelic acid (SDAP), forming succinate and LL-2,6-diaminopimelate (DAP), an intermediate involved in the bacterial biosynthesis of lysine and meso-diaminopimelic acid, an essential component of bacterial cell walls. In Shewanella putrefaciens (strain CN-32 / ATCC BAA-453), this protein is Succinyl-diaminopimelate desuccinylase.